The primary structure comprises 361 residues: uncharacterized protein (361 aa).

Residues 1 to 28 form the signal peptide; it reads MSKSKFTKIIVVICIAAMFITGTSILSF.

This is an uncharacterized protein from Ruminiclostridium cellulolyticum (strain ATCC 35319 / DSM 5812 / JCM 6584 / H10) (Clostridium cellulolyticum).